A 576-amino-acid chain; its full sequence is MPKAGEQARQGGCCGSLANYLTSAKFLLYLGHSLSTWGDRMWHFAVSVFLVELYGNSLLLTAVYGLVVAGSVLVLGAIIGDWVDKNARLKVAQTSLVVQNVSVILCGIILMMVFLHKNELLTMYHGWVLTFCYILIITIADVANLASTATAITIQRDWIVVVAGGDRSKLADMNATIRRIDQLTNILAPMAVGQIMTFGSAVIGCGFISGWNLVSMCVEYFLLWKVYQKTPALAVKAALKVEEAELKQLNLHKETEPKPLEGTHLMGEKDPNVHELEHEQEPSCASQMAEPFRTFRDGWVSYYNQSVFLAGMGLAFLYMTVLGFDCITTGYAYTQGLSGSILSILMGASAITGIMGTVAFTWLRRKCGLVRTGLISGFAQLSCLILCVISVFMPGSPLDLSVSPFEDIRSRFIQAEPLSTMTPTKVPEIIFTTEMHMSNGSDPAGIFPETTPKSVPIISVSLLFAGVIAARIGLWSFDLTVTQLLQENVIESERGIINGVQNSMNYLLDLLHFIMVILAPNPEAFGLLVLISVSFVAMGHIMYFRFAQKTLGSKLFACGADDEEVTNENQANTSVV.

Over 1-23 the chain is Cytoplasmic; it reads MPKAGEQARQGGCCGSLANYLTS. The chain crosses the membrane as a helical span at residues 24 to 53; the sequence is AKFLLYLGHSLSTWGDRMWHFAVSVFLVEL. Asp39 and His43 together coordinate Fe cation. Over 54–57 the chain is Extracellular; that stretch reads YGNS. The chain crosses the membrane as a helical span at residues 58 to 84; it reads LLLTAVYGLVVAGSVLVLGAIIGDWVD. Residues 85 to 87 lie on the Cytoplasmic side of the membrane; sequence KNA. The helical transmembrane segment at 88 to 118 threads the bilayer; sequence RLKVAQTSLVVQNVSVILCGIILMMVFLHKN. The Extracellular segment spans residues 119 to 126; that stretch reads ELLTMYHG. A helical transmembrane segment spans residues 127–162; sequence WVLTFCYILIITIADVANLASTATAITIQRDWIVVV. Residues 163–164 are Cytoplasmic-facing; the sequence is AG. A helical transmembrane segment spans residues 165–195; that stretch reads GDRSKLADMNATIRRIDQLTNILAPMAVGQI. Residues 196 to 202 lie on the Extracellular side of the membrane; the sequence is MTFGSAV. A helical transmembrane segment spans residues 203 to 229; that stretch reads IGCGFISGWNLVSMCVEYFLLWKVYQK. Topologically, residues 230–306 are cytoplasmic; the sequence is TPALAVKAAL…DGWVSYYNQS (77 aa). Residues 307–333 traverse the membrane as a helical segment; it reads VFLAGMGLAFLYMTVLGFDCITTGYAY. Cys326 is a binding site for Fe cation. The Extracellular segment spans residues 334–338; sequence TQGLS. A helical transmembrane segment spans residues 339 to 366; the sequence is GSILSILMGASAITGIMGTVAFTWLRRK. At 367–368 the chain is on the cytoplasmic side; it reads CG. A helical membrane pass occupies residues 369–391; it reads LVRTGLISGFAQLSCLILCVISV. The Extracellular segment spans residues 392-458; it reads FMPGSPLDLS…ETTPKSVPII (67 aa). N-linked (GlcNAc...) asparagine glycosylation is present at Asn439. A helical transmembrane segment spans residues 459–488; that stretch reads SVSLLFAGVIAARIGLWSFDLTVTQLLQEN. Over 489 to 493 the chain is Cytoplasmic; that stretch reads VIESE. The helical transmembrane segment at 494–518 threads the bilayer; that stretch reads RGIINGVQNSMNYLLDLLHFIMVIL. Residue His512 coordinates Fe cation. Residues 519 to 521 are Extracellular-facing; it reads APN. The chain crosses the membrane as a helical span at residues 522-547; it reads PEAFGLLVLISVSFVAMGHIMYFRFA. Topologically, residues 548–576 are cytoplasmic; that stretch reads QKTLGSKLFACGADDEEVTNENQANTSVV.

It belongs to the ferroportin (FP) (TC 2.A.100) family. SLC40A subfamily. As to quaternary structure, identified in a complex with STOM. Interacts with HAMP; affinity of the peptide hormone HAMP for SLC40A1 increases by 80-fold in the presence of iron and the interaction promotes SLC40A1 ubiquitination and degradation. Part of a complex composed of SLC40A1/ferroportin, TF/transferrin and HEPH/hephaestin that transfers iron from cells to transferrin. Post-translationally, polyubiquitinated by RNF217; leading to proteasomal degradation. Under conditions of high systemic iron levels, both the hormone peptide hepcidin/HAMP and holo(iron bound)-transferrin/TF induce the ubiquitination, internalization and proteasomal degradation of SLC40A1 to control iron release from cells.

It localises to the cell membrane. The protein resides in the basolateral cell membrane. The catalysed reaction is Fe(2+)(in) = Fe(2+)(out). Its activity is regulated as follows. During elevated serum iron levels, liver-derived hepcidin/HAMP negatively regulates cell surface ferroportin/SLC40A1 by inducing its ubiquitination, internalization, and degradation. Indeed, hepcidin/HAMP affinity towards ferroportin/SLC40A1 increases by 80-fold in the presence of iron. Transports Fe(2+) from the inside of a cell to the outside of the cell, playing a key role for maintaining systemic iron homeostasis. Transports iron from intestinal, splenic, hepatic cells, macrophages and erythrocytes into the blood to provide iron to other tissues. Controls therefore dietary iron uptake, iron recycling by macrophages and erythrocytes, and release of iron stores in hepatocytes. When iron is in excess in serum, circulating HAMP/hepcidin levels increase resulting in a degradation of SLC40A1, thus limiting the iron efflux to plasma. The chain is Ferroportin from Canis lupus familiaris (Dog).